The sequence spans 149 residues: Oligosaccharyltransferase complex subunit ostc-B (149 aa).

Residues 1–32 are Cytoplasmic-facing; the sequence is MESLYRIPFTVLECPNLKLKKPSWLHMPSAMT. The chain crosses the membrane as a helical span at residues 33–53; it reads VYAMVVVSYFLITGGIIYDVI. Residues 54-83 are Extracellular-facing; it reads VEPPSVGSMTDEHGHQRPVAFLAYRVNGQY. The helical transmembrane segment at 84 to 104 threads the bilayer; it reads IMEGLASSFLFTMGGLGFIIL. Over 105–117 the chain is Cytoplasmic; sequence DRSNAPNIPKLNR. The helical transmembrane segment at 118-138 threads the bilayer; it reads FLLLFIGFVCVLLSFFMARVF. Topologically, residues 139–149 are extracellular; sequence MRMKLPGYLMG.

This sequence belongs to the OSTC family. Specific component of the STT3A-containing form of the oligosaccharyltransferase (OST) complex.

It is found in the membrane. Its pathway is protein modification; protein glycosylation. In terms of biological role, specific component of the STT3A-containing form of the oligosaccharyl transferase (OST) complex that catalyzes the initial transfer of a defined glycan (Glc(3)Man(9)GlcNAc(2) in eukaryotes) from the lipid carrier dolichol-pyrophosphate to an asparagine residue within an Asn-X-Ser/Thr consensus motif in nascent polypeptide chains, the first step in protein N-glycosylation. N-glycosylation occurs cotranslationally and the complex associates with the Sec61 complex at the channel-forming translocon complex that mediates protein translocation across the endoplasmic reticulum (ER). All subunits are required for a maximal enzyme activity. This chain is Oligosaccharyltransferase complex subunit ostc-B, found in Xenopus laevis (African clawed frog).